Reading from the N-terminus, the 400-residue chain is Phosphoglycerate kinase (400 aa).

Substrate is bound by residues 22-24 (DFN), arginine 38, 61-64 (HLGR), arginine 119, and arginine 152. Residues lysine 205, glycine 296, glutamate 327, and 353–356 (GGDT) each bind ATP.

This sequence belongs to the phosphoglycerate kinase family. Monomer.

It is found in the cytoplasm. The catalysed reaction is (2R)-3-phosphoglycerate + ATP = (2R)-3-phospho-glyceroyl phosphate + ADP. The protein operates within carbohydrate degradation; glycolysis; pyruvate from D-glyceraldehyde 3-phosphate: step 2/5. The sequence is that of Phosphoglycerate kinase from Campylobacter jejuni subsp. jejuni serotype O:2 (strain ATCC 700819 / NCTC 11168).